The primary structure comprises 437 residues: tRNA-2-methylthio-N(6)-dimethylallyladenosine synthase (437 aa).

Residues 1 to 115 form the MTTase N-terminal domain; the sequence is MKVYIETMGC…ISQVIHKEKA (115 aa). Residues Cys-10, Cys-46, Cys-78, Cys-148, Cys-152, and Cys-155 each coordinate [4Fe-4S] cluster. A Radical SAM core domain is found at 134 to 367; that stretch reads KKAQIRSLLN…QNRHKEILEE (234 aa). The TRAM domain maps to 370–436; sequence KLEVGKTHVV…KGRLMATTKG (67 aa).

This sequence belongs to the methylthiotransferase family. MiaB subfamily. As to quaternary structure, monomer. [4Fe-4S] cluster is required as a cofactor.

Its subcellular location is the cytoplasm. The catalysed reaction is N(6)-dimethylallyladenosine(37) in tRNA + (sulfur carrier)-SH + AH2 + 2 S-adenosyl-L-methionine = 2-methylsulfanyl-N(6)-dimethylallyladenosine(37) in tRNA + (sulfur carrier)-H + 5'-deoxyadenosine + L-methionine + A + S-adenosyl-L-homocysteine + 2 H(+). In terms of biological role, catalyzes the methylthiolation of N6-(dimethylallyl)adenosine (i(6)A), leading to the formation of 2-methylthio-N6-(dimethylallyl)adenosine (ms(2)i(6)A) at position 37 in tRNAs that read codons beginning with uridine. In Helicobacter pylori (strain G27), this protein is tRNA-2-methylthio-N(6)-dimethylallyladenosine synthase.